The sequence spans 522 residues: Peptide chain release factor 3 (522 aa).

A tr-type G domain is found at 9-276; that stretch reads KKRRTFAIIS…SFVNLAPAPQ (268 aa). Residues 18 to 25, 86 to 90, and 140 to 143 each bind GTP; these read SHPDAGKT, DTPGH, and NKLD.

It belongs to the TRAFAC class translation factor GTPase superfamily. Classic translation factor GTPase family. PrfC subfamily.

The protein resides in the cytoplasm. Increases the formation of ribosomal termination complexes and stimulates activities of RF-1 and RF-2. It binds guanine nucleotides and has strong preference for UGA stop codons. It may interact directly with the ribosome. The stimulation of RF-1 and RF-2 is significantly reduced by GTP and GDP, but not by GMP. The chain is Peptide chain release factor 3 from Lactobacillus johnsonii (strain CNCM I-12250 / La1 / NCC 533).